The following is a 243-amino-acid chain: Ubiquinone/menaquinone biosynthesis C-methyltransferase UbiE (243 aa).

Residues Thr-69, Asp-90, and 116 to 117 (DA) each bind S-adenosyl-L-methionine.

It belongs to the class I-like SAM-binding methyltransferase superfamily. MenG/UbiE family.

It carries out the reaction a 2-demethylmenaquinol + S-adenosyl-L-methionine = a menaquinol + S-adenosyl-L-homocysteine + H(+). The enzyme catalyses a 2-methoxy-6-(all-trans-polyprenyl)benzene-1,4-diol + S-adenosyl-L-methionine = a 5-methoxy-2-methyl-3-(all-trans-polyprenyl)benzene-1,4-diol + S-adenosyl-L-homocysteine + H(+). It participates in quinol/quinone metabolism; menaquinone biosynthesis; menaquinol from 1,4-dihydroxy-2-naphthoate: step 2/2. It functions in the pathway cofactor biosynthesis; ubiquinone biosynthesis. In terms of biological role, methyltransferase required for the conversion of demethylmenaquinol (DMKH2) to menaquinol (MKH2) and the conversion of 2-polyprenyl-6-methoxy-1,4-benzoquinol (DDMQH2) to 2-polyprenyl-3-methyl-6-methoxy-1,4-benzoquinol (DMQH2). This Paraburkholderia phymatum (strain DSM 17167 / CIP 108236 / LMG 21445 / STM815) (Burkholderia phymatum) protein is Ubiquinone/menaquinone biosynthesis C-methyltransferase UbiE.